We begin with the raw amino-acid sequence, 784 residues long: MIRSQSYCFLGITITIYFFFCLLPLPNTFASPPTQSLCRHDQRDALLELQKEFPIPSVILQNPWNKGIDCCSWGGVTCDAILGEVISLKLYFLSTASTSLKSSSALFKLQHLTHLDLSNCNLQGEIPSSIENLSHLTHLDLSTNHLVGEVPASIGNLNQLEYIDLRGNHLRGNIPTSFANLTKLSLLDLHENNFTGGDIVLSNLTSLAILDLSSNHFKSFFSADLSGLHNLEQIFGNENSFVGLFPASLLKISSLDKIQLSQNQFEGPIDFGNTSSSSRLTMLDISHNNFIGRVPSSLSKLVNLELLDLSHNNFRGLSPRSISKLVNLTSLDISYNKLEGQVPYFIWKPSNLQSVDLSHNSFFDLGKSVEVVNGAKLVGLNLGSNSLQGPIPQWICNFRFVFFLDLSDNRFTGSIPQCLKNSTDFNTLNLRNNSLSGFLPELCMDSTMLRSLDVSYNNFVGKLPKSLMNCQDMEFLNVRGNKIKDTFPFWLGSRKSLMVLVLRSNAFYGPVYNSTTYLGFPRLSIIDISNNDFVGSLPQDYFANWTEMATVWDINRLNYARNTSSRTIQYGGLQTIQRSNYVGDNFNMHADSMDLAYKGVDTDFNRIFRGFKVIDFSGNRFSGHIPRSIGLLSELLHLNLSGNAFTGNIPPSLANITNLETLDLSRNNLSGEIPRSLGNLSFLSNINFSHNHLQGFVPRSTQFGTQNCSSFVGNPGLYGLDEICRESHHVPVPTSQQHDGSSSELEEPVLNWIAAAIAFGPGVFCGFVIGHIFTSYKHLWFIAR.

The first 30 residues, 1 to 30 (MIRSQSYCFLGITITIYFFFCLLPLPNTFA), serve as a signal peptide directing secretion. Residues 31 to 752 (SPPTQSLCRH…SELEEPVLNW (722 aa)) lie on the Extracellular side of the membrane. LRR repeat units follow at residues 109–133 (LQHL…IENL), 134–157 (SHLT…IGNL), 158–180 (NQLE…SFAN), 182–204 (TKLS…LSNL), and 205–227 (TSLA…DLSG). Asparagine 132 carries N-linked (GlcNAc...) asparagine glycosylation. 3 N-linked (GlcNAc...) asparagine glycosylation sites follow: asparagine 180, asparagine 193, and asparagine 203. The LRR 6; degenerate repeat unit spans residues 228 to 251 (LHNLEQIFGNENSFVGLFPASLLK). LRR repeat units follow at residues 252 to 276 (ISSL…NTSS), 278 to 301 (SRLT…LSKL), 302 to 324 (VNLE…SISK), 326 to 349 (VNLT…IWKP), 351 to 373 (NLQS…EVVN), 374 to 400 (GAKL…NFRF), 402 to 422 (FFLD…LKNS), 423 to 446 (TDFN…CMDS), 447 to 470 (TMLR…LMNC), and 472 to 496 (DMEF…SRKS). N-linked (GlcNAc...) asparagine glycosylation occurs at asparagine 273. An N-linked (GlcNAc...) asparagine glycan is attached at asparagine 327. N-linked (GlcNAc...) asparagine glycosylation is found at asparagine 421 and asparagine 432. The LRR 17; degenerate repeat unit spans residues 497–518 (LMVLVLRSNAFYGPVYNSTTYL). Asparagine 513, asparagine 544, and asparagine 562 each carry an N-linked (GlcNAc...) asparagine glycan. One copy of the LRR 18 repeat lies at 520–544 (FPRLSIIDISNNDFVGSLPQDYFAN). LRR repeat units lie at residues 608–632 (FRGF…IGLL), 633–656 (SELL…LANI), 657–680 (TNLE…LGNL), and 682–705 (FLSN…QFGT). 6 N-linked (GlcNAc...) asparagine glycosylation sites follow: asparagine 639, asparagine 655, asparagine 668, asparagine 679, asparagine 687, and asparagine 707. A helical membrane pass occupies residues 753–773 (IAAAIAFGPGVFCGFVIGHIF). Over 774-784 (TSYKHLWFIAR) the chain is Cytoplasmic.

It belongs to the RLP family.

The protein localises to the cell membrane. This chain is Receptor-like protein 38, found in Arabidopsis thaliana (Mouse-ear cress).